Here is a 712-residue protein sequence, read N- to C-terminus: Polyribonucleotide nucleotidyltransferase (712 aa).

Aspartate 484 and aspartate 490 together coordinate Mg(2+). Residues 550-609 (PKYKTMDVNPEKIRVLIGPGGKNIKAIIEETGSDVEIQDSGVVNIFAPDTPTLDKTIKLI) enclose the KH domain. Positions 619-686 (GEVYDGIVKD…KGGKYSLSRK (68 aa)) constitute an S1 motif domain.

This sequence belongs to the polyribonucleotide nucleotidyltransferase family. It depends on Mg(2+) as a cofactor.

The protein localises to the cytoplasm. The catalysed reaction is RNA(n+1) + phosphate = RNA(n) + a ribonucleoside 5'-diphosphate. Involved in mRNA degradation. Catalyzes the phosphorolysis of single-stranded polyribonucleotides processively in the 3'- to 5'-direction. The sequence is that of Polyribonucleotide nucleotidyltransferase from Brachyspira hyodysenteriae (strain ATCC 49526 / WA1).